The sequence spans 508 residues: Hydroxymethylglutaryl-CoA synthase, mitochondrial (508 aa).

Residues Met-1–Ser-37 constitute a mitochondrion transit peptide. The residue at position 52 (Lys-52) is an N6-succinyllysine. (3S)-3-hydroxy-3-methylglutaryl-CoA is bound by residues Glu-80 and Ala-81. An N6-acetyllysine; alternate mark is found at Lys-83 and Lys-118. Lys-83 and Lys-118 each carry N6-succinyllysine; alternate. The active-site Proton donor/acceptor is the Glu-132. Residues Cys-166, Asn-204, and Thr-208 each contribute to the (3S)-3-hydroxy-3-methylglutaryl-CoA site. The Acyl-thioester intermediate role is filled by Cys-166. The residue at position 221 (Lys-221) is an N6-succinyllysine. Lys-243 carries the N6-acetyllysine modification. Lys-256 is modified (N6-acetyllysine; alternate). The residue at position 256 (Lys-256) is an N6-succinyllysine; alternate. (3S)-3-hydroxy-3-methylglutaryl-CoA-binding residues include Ser-258 and His-301. Catalysis depends on His-301, which acts as the Proton donor/acceptor. An N6-acetyllysine modification is found at Lys-306. Lys-310 is a binding site for (3S)-3-hydroxy-3-methylglutaryl-CoA. An N6-acetyllysine; alternate mark is found at Lys-310 and Lys-327. Lys-310 and Lys-327 each carry N6-succinyllysine; alternate. Lys-333 carries the post-translational modification N6-succinyllysine. An N6-acetyllysine; alternate mark is found at Lys-342, Lys-350, Lys-354, and Lys-358. 4 positions are modified to N6-succinyllysine; alternate: Lys-342, Lys-350, Lys-354, and Lys-358. 2 residues coordinate (3S)-3-hydroxy-3-methylglutaryl-CoA: Asn-380 and Ser-414. Lys-427 bears the N6-acetyllysine mark. Residue Ser-433 is modified to Phosphoserine. Lys-437 is subject to N6-acetyllysine. At Ser-440 the chain carries Phosphoserine. Lys-447 carries the post-translational modification N6-acetyllysine; alternate. Residue Lys-447 is modified to N6-succinyllysine; alternate. Residue Ser-456 is modified to Phosphoserine. Lys-473 carries the N6-acetyllysine; alternate modification. The residue at position 473 (Lys-473) is an N6-succinyllysine; alternate. Phosphoserine is present on Ser-477.

The protein belongs to the thiolase-like superfamily. HMG-CoA synthase family. As to quaternary structure, homodimer. Post-translationally, acetylation of Lys-427 is observed in liver mitochondria from fasted mice but not from fed mice. In terms of processing, succinylated. Desuccinylated by SIRT5. Succinylation, at least at Lys-83 and Lys-310, inhibits the enzymatic activity. Liver and kidney.

The protein resides in the mitochondrion. It catalyses the reaction acetoacetyl-CoA + acetyl-CoA + H2O = (3S)-3-hydroxy-3-methylglutaryl-CoA + CoA + H(+). The protein operates within metabolic intermediate biosynthesis; (R)-mevalonate biosynthesis; (R)-mevalonate from acetyl-CoA: step 2/3. Functionally, catalyzes the first irreversible step in ketogenesis, condensing acetyl-CoA to acetoacetyl-CoA to form HMG-CoA, which is converted by HMG-CoA reductase (HMGCR) into mevalonate. The chain is Hydroxymethylglutaryl-CoA synthase, mitochondrial (Hmgcs2) from Mus musculus (Mouse).